The chain runs to 311 residues: Probable manganese-dependent inorganic pyrophosphatase (311 aa).

The Mn(2+) site is built by His-9, Asp-13, Asp-15, Asp-75, His-97, and Asp-149.

The protein belongs to the PPase class C family. Mn(2+) is required as a cofactor.

It localises to the cytoplasm. It catalyses the reaction diphosphate + H2O = 2 phosphate + H(+). The polypeptide is Probable manganese-dependent inorganic pyrophosphatase (Lactobacillus johnsonii (strain CNCM I-12250 / La1 / NCC 533)).